The sequence spans 406 residues: Putative colanic acid biosynthesis glycosyltransferase WcaL (406 aa).

This sequence belongs to the glycosyltransferase group 1 family. Glycosyltransferase 4 subfamily.

It functions in the pathway slime biogenesis; slime polysaccharide biosynthesis. This chain is Putative colanic acid biosynthesis glycosyltransferase WcaL (wcaL), found in Escherichia coli (strain K12).